Consider the following 211-residue polypeptide: Arginine exporter protein ArgO (211 aa).

Transmembrane regions (helical) follow at residues 1–21 (MFTY…PLGP), 37–57 (LMIA…GIFG), 68–88 (LLAL…FGAL), 111–131 (IIIT…DTFV), 147–167 (WFAL…ALLA), and 179–199 (AQRI…FQLA).

Belongs to the LysE/ArgO transporter (TC 2.A.75) family.

Its subcellular location is the cell inner membrane. It catalyses the reaction L-arginine(in) = L-arginine(out). In terms of biological role, involved in the export of arginine. Important to control the intracellular level of arginine and the correct balance between arginine and lysine. This Klebsiella pneumoniae subsp. pneumoniae (strain ATCC 700721 / MGH 78578) protein is Arginine exporter protein ArgO.